The primary structure comprises 267 residues: Glutamate racemase (267 aa).

Substrate-binding positions include D9–S10 and Y41–G42. C72 acts as the Proton donor/acceptor in catalysis. N73–T74 is a binding site for substrate. The active-site Proton donor/acceptor is the C184. T185 to H186 contacts substrate.

The protein belongs to the aspartate/glutamate racemases family.

The catalysed reaction is L-glutamate = D-glutamate. The protein operates within cell wall biogenesis; peptidoglycan biosynthesis. In terms of biological role, provides the (R)-glutamate required for cell wall biosynthesis. In Staphylococcus epidermidis (strain ATCC 12228 / FDA PCI 1200), this protein is Glutamate racemase.